The primary structure comprises 427 residues: Peptidase B (427 aa).

Mn(2+)-binding residues include lysine 195 and aspartate 200. Residue lysine 207 is part of the active site. 3 residues coordinate Mn(2+): aspartate 218, aspartate 277, and glutamate 279. Residue arginine 281 is part of the active site.

It belongs to the peptidase M17 family. As to quaternary structure, homohexamer. It depends on Mn(2+) as a cofactor.

The protein localises to the cytoplasm. It catalyses the reaction Release of an N-terminal amino acid, Xaa, from a peptide or arylamide. Xaa is preferably Glu or Asp but may be other amino acids, including Leu, Met, His, Cys and Gln.. Its function is as follows. Probably plays an important role in intracellular peptide degradation. This is Peptidase B from Escherichia coli O7:K1 (strain IAI39 / ExPEC).